The following is a 268-amino-acid chain: Tryptophan synthase alpha chain (268 aa).

Catalysis depends on proton acceptor residues Glu49 and Asp60.

Belongs to the TrpA family. As to quaternary structure, tetramer of two alpha and two beta chains.

It catalyses the reaction (1S,2R)-1-C-(indol-3-yl)glycerol 3-phosphate + L-serine = D-glyceraldehyde 3-phosphate + L-tryptophan + H2O. It participates in amino-acid biosynthesis; L-tryptophan biosynthesis; L-tryptophan from chorismate: step 5/5. Its function is as follows. The alpha subunit is responsible for the aldol cleavage of indoleglycerol phosphate to indole and glyceraldehyde 3-phosphate. The sequence is that of Tryptophan synthase alpha chain from Escherichia coli (strain ATCC 8739 / DSM 1576 / NBRC 3972 / NCIMB 8545 / WDCM 00012 / Crooks).